A 1345-amino-acid polypeptide reads, in one-letter code: Vascular endothelial growth factor receptor 2 (1345 aa).

The N-terminal stretch at 1-19 is a signal peptide; it reads MESKALLAVALWFCVETRA. At 20 to 762 the chain is on the extracellular side; it reads ASVGLPGDFL…EGAQEKTNLE (743 aa). 5 N-linked (GlcNAc...) asparagine glycosylation sites follow: Asn46, Asn98, Asn145, Asn160, and Asn247. Ig-like C2-type domains lie at 46–111, 143–209, 226–325, 330–416, 423–542, 549–656, and 665–751; these read NTTL…RDVD, NKNK…INDE, YDVI…TFVR, PFIA…HMVS, PQIG…RVIS, PEIT…LVKQ, and PMIT…TLFI. Cys53 and Cys105 are oxidised to a cystine. An intrachain disulfide couples Cys152 to Cys202. Cys248 and Cys309 are joined by a disulfide. Residues Asn320, Asn376, Asn397, Asn509, Asn521, Asn578, Asn611, Asn617, Asn629, Asn673, Asn702, and Asn719 are each glycosylated (N-linked (GlcNAc...) asparagine). Intrachain disulfides connect Cys447–Cys528 and Cys569–Cys640. Cys686 and Cys735 form a disulfide bridge. A helical transmembrane segment spans residues 763–783; sequence VIILVGTAVIAMFFWLLLVIV. At 784-1345 the chain is on the cytoplasmic side; the sequence is LRTVKRANEG…SGTTLRSPPV (562 aa). Tyr799 carries the post-translational modification Phosphotyrosine. The 329-residue stretch at 832-1160 folds into the Protein kinase domain; that stretch reads LKLGKPLGRG…FSELVEHLGN (329 aa). Residues 838 to 846 and Lys866 contribute to the ATP site; that span reads LGRGAFGQV. Tyr949 bears the Phosphotyrosine; by autocatalysis mark. Ser980 and Ser982 each carry phosphoserine. Tyr994 carries the phosphotyrosine; by autocatalysis modification. Residues Cys1022 and Cys1043 are joined by a disulfide bond. Catalysis depends on Asp1026, which acts as the Proton acceptor. 4 positions are modified to phosphotyrosine; by autocatalysis: Tyr1052, Tyr1057, Tyr1173, and Tyr1212. 2 positions are modified to phosphoserine: Ser1229 and Ser1233. The residue at position 1236 (Thr1236) is a Phosphothreonine. Residues 1272 to 1316 are disordered; sequence DRNKLSPSFGGMMPSKSRESVASEGSNQTSGYQSGYHSDDTDTTV. Residues 1294–1307 are compositionally biased toward polar residues; that stretch reads SEGSNQTSGYQSGY. Phosphotyrosine; by autocatalysis is present on residues Tyr1303, Tyr1307, and Tyr1317.

The protein belongs to the protein kinase superfamily. Tyr protein kinase family. CSF-1/PDGF receptor subfamily. Homodimer in the presence of bound dimeric VEGFA, VEGFC or VEGFD ligands; monomeric in the absence of bound ligands. Can also form heterodimers with FLT1/VEGFR1 and KDR/VEGFR2. Interacts (tyrosine phosphorylated) with LFYN, NCK1, PLCG1. Interacts (tyrosine-phosphorylated active form preferentially) with DAB2IP (via C2 domain and active form preferentially); the interaction occurs at the late phase of VEGFA response and inhibits KDR/VEGFR2 activity. Interacts with SHBSH2D2A/TSAD, GRB2, MYOF, CBL and PDCD6. Interacts (via C-terminus domain) with ERN1 (via kinase domain); the interaction is facilitated in a XBP1 isoform 1- and vascular endothelial growth factor (VEGF)-dependent manner in endothelial cells. Interacts (via juxtamembrane region) with chaperone PDCL3 (via thioredoxin fold region); the interaction leads to increased KDR/VEGFR2 abundance through inhibition of its ubiquitination and degradation. Interacts (tyrosine phosphorylated) with CCDC88A/GIV (via SH2-like region); binding requires autophosphorylation of the KDR/VEGFR2 C-terminal region. Interacts with isoform 2 of BSG. Interacts with SLC31A1; this interaction is induced upon VEGFA stimulation leading to SLC31A1 and KDR subsequent co-internalization to early endosomes, thereby activating KDR downstream signaling in endothelial cells. Post-translationally, N-glycosylated. In terms of processing, ubiquitinated. Tyrosine phosphorylation of the receptor promotes its poly-ubiquitination, leading to its degradation via the proteasome or lysosomal proteases. Autophosphorylated on tyrosine residues upon ligand binding. Autophosphorylation occurs in trans, i.e. one subunit of the dimeric receptor phosphorylates tyrosine residues on the other subunit. Phosphorylation at Tyr-949 is important for interaction with SH2D2A/TSAD and VEGFA-mediated reorganization of the actin cytoskeleton. Phosphorylation at Tyr-1173 is important for interaction with PLCG1 and SHB. Phosphorylation at Tyr-1212 is important for interaction with NCK1 and FYN. Dephosphorylated by PTPRJ at Tyr-799, Tyr-949, Tyr-994, Tyr-1052, Tyr-1057, Tyr-1173 and Tyr-1212. Post-translationally, the inhibitory disulfide bond between Cys-1022 and Cys-1043 may serve as a specific molecular switch for H(2)S-induced modification that regulates KDR/VEGFR2 function. In terms of tissue distribution, expressed in endothelial cells (at protein level). Detected in embryonic endothelial cells, as well as hematopoietic stem and progenitor cells. Detected in vascular endothelium. Expressed at high levels in adult heart, lung, kidney, brain and skeletal muscle, but is also expressed at lower levels in most other adult tissues.

It localises to the cell junction. The protein resides in the endoplasmic reticulum. The protein localises to the cell membrane. Its subcellular location is the cytoplasm. It is found in the nucleus. It localises to the cytoplasmic vesicle. The protein resides in the early endosome. The protein localises to the secreted. It carries out the reaction L-tyrosyl-[protein] + ATP = O-phospho-L-tyrosyl-[protein] + ADP + H(+). Its activity is regulated as follows. Present in an inactive conformation in the absence of bound ligand. Binding of VEGFA, VEGFC or VEGFD leads to dimerization and activation by autophosphorylation on tyrosine residues. May be regulated by hydrogen sulfide (H(2)S) levels via a sensitive intracellular disulfide bond. Functionally, tyrosine-protein kinase that acts as a cell-surface receptor for VEGFA, VEGFC and VEGFD. Plays an essential role in the regulation of angiogenesis, vascular development, vascular permeability, and embryonic hematopoiesis. Promotes proliferation, survival, migration and differentiation of endothelial cells. Promotes reorganization of the actin cytoskeleton. Isoforms lacking a transmembrane domain, such as isoform 2, may function as decoy receptors for VEGFA, VEGFC and/or VEGFD. Isoform 2 plays an important role as a negative regulator of VEGFA- and VEGFC-mediated lymphangiogenesis by limiting the amount of free VEGFA and/or VEGFC and by preventing their binding to FLT4. Modulates FLT1 and FLT4 signaling by forming heterodimers. Binding of vascular growth factors to isoform 1 leads to the activation of several signaling cascades. Activation of PLCG1 leads to the production of the cellular signaling molecules diacylglycerol and inositol 1,4,5-trisphosphate and the activation of protein kinase C. Mediates activation of MAPK1/ERK2, MAPK3/ERK1 and the MAP kinase signaling pathway, as well as of the AKT1 signaling pathway. Mediates phosphorylation of PIK3R1, the regulatory subunit of phosphatidylinositol 3-kinase, reorganization of the actin cytoskeleton and activation of PTK2/FAK1. Required for VEGFA-mediated induction of NOS2 and NOS3, leading to the production of the signaling molecule nitric oxide (NO) by endothelial cells. Phosphorylates PLCG1. Promotes phosphorylation of FYN, NCK1, NOS3, PIK3R1, PTK2/FAK1 and SRC. The polypeptide is Vascular endothelial growth factor receptor 2 (Mus musculus (Mouse)).